Consider the following 397-residue polypeptide: CCA-adding enzyme (397 aa).

Gly-26 and Arg-29 together coordinate ATP. CTP-binding residues include Gly-26 and Arg-29. The Mg(2+) site is built by Asp-39 and Asp-41. ATP is bound by residues Arg-110, Asp-153, Arg-156, Arg-159, and Arg-162. CTP-binding residues include Arg-110, Asp-153, Arg-156, Arg-159, and Arg-162.

It belongs to the tRNA nucleotidyltransferase/poly(A) polymerase family. Bacterial CCA-adding enzyme type 3 subfamily. Homodimer. Mg(2+) is required as a cofactor.

It catalyses the reaction a tRNA precursor + 2 CTP + ATP = a tRNA with a 3' CCA end + 3 diphosphate. It carries out the reaction a tRNA with a 3' CCA end + 2 CTP + ATP = a tRNA with a 3' CCACCA end + 3 diphosphate. Functionally, catalyzes the addition and repair of the essential 3'-terminal CCA sequence in tRNAs without using a nucleic acid template. Adds these three nucleotides in the order of C, C, and A to the tRNA nucleotide-73, using CTP and ATP as substrates and producing inorganic pyrophosphate. tRNA 3'-terminal CCA addition is required both for tRNA processing and repair. Also involved in tRNA surveillance by mediating tandem CCA addition to generate a CCACCA at the 3' terminus of unstable tRNAs. While stable tRNAs receive only 3'-terminal CCA, unstable tRNAs are marked with CCACCA and rapidly degraded. In Bacillus cereus (strain 03BB102), this protein is CCA-adding enzyme.